A 56-amino-acid polypeptide reads, in one-letter code: Turripeptide XIV-01 (56 aa).

The signal sequence occupies residues M1–A21. Positions K22–E30 are excised as a propeptide.

Post-translationally, contains 2 disulfide bonds. Expressed by the venom duct.

The protein localises to the secreted. This chain is Turripeptide XIV-01, found in Gemmula speciosa (Splendid gem-turris).